Consider the following 337-residue polypeptide: Probable uridine nucleosidase 2 (337 aa).

The active site involves His-260.

This sequence belongs to the IUNH family.

The protein resides in the cytoplasm. The catalysed reaction is uridine + H2O = D-ribose + uracil. Its function is as follows. Involved in pyrimidine breakdown. This is Probable uridine nucleosidase 2 (URH2) from Oryza sativa subsp. japonica (Rice).